Here is a 147-residue protein sequence, read N- to C-terminus: Large ribosomal subunit protein bL9 (147 aa).

It belongs to the bacterial ribosomal protein bL9 family.

Binds to the 23S rRNA. This chain is Large ribosomal subunit protein bL9, found in Clostridium botulinum (strain ATCC 19397 / Type A).